We begin with the raw amino-acid sequence, 545 residues long: Chaperonin GroEL (545 aa).

ATP contacts are provided by residues 30–33 (TLGP), Lys51, 87–91 (DGTTT), Gly415, and Asp496. The interval 526–545 (PEPKAPAGGMPDMGGMGGMM) is disordered. The span at 536–545 (PDMGGMGGMM) shows a compositional bias: gly residues.

The protein belongs to the chaperonin (HSP60) family. Forms a cylinder of 14 subunits composed of two heptameric rings stacked back-to-back. Interacts with the co-chaperonin GroES.

The protein localises to the cytoplasm. The catalysed reaction is ATP + H2O + a folded polypeptide = ADP + phosphate + an unfolded polypeptide.. Functionally, together with its co-chaperonin GroES, plays an essential role in assisting protein folding. The GroEL-GroES system forms a nano-cage that allows encapsulation of the non-native substrate proteins and provides a physical environment optimized to promote and accelerate protein folding. The protein is Chaperonin GroEL of Paracoccus denitrificans (strain Pd 1222).